We begin with the raw amino-acid sequence, 421 residues long: D-amino acid dehydrogenase (421 aa).

Residue 4 to 18 coordinates FAD; it reads VLVLGSGVVGLTSAW.

This sequence belongs to the DadA oxidoreductase family. It depends on FAD as a cofactor.

It carries out the reaction a D-alpha-amino acid + A + H2O = a 2-oxocarboxylate + AH2 + NH4(+). Functionally, oxidative deamination of D-amino acids. The chain is D-amino acid dehydrogenase from Vibrio cholerae serotype O1 (strain ATCC 39315 / El Tor Inaba N16961).